Consider the following 282-residue polypeptide: 2-dehydro-3-deoxyphosphooctonate aldolase (282 aa).

The protein belongs to the KdsA family.

The protein localises to the cytoplasm. It carries out the reaction D-arabinose 5-phosphate + phosphoenolpyruvate + H2O = 3-deoxy-alpha-D-manno-2-octulosonate-8-phosphate + phosphate. It functions in the pathway carbohydrate biosynthesis; 3-deoxy-D-manno-octulosonate biosynthesis; 3-deoxy-D-manno-octulosonate from D-ribulose 5-phosphate: step 2/3. Its pathway is bacterial outer membrane biogenesis; lipopolysaccharide biosynthesis. In Shewanella baltica (strain OS223), this protein is 2-dehydro-3-deoxyphosphooctonate aldolase.